The sequence spans 342 residues: Dihydroorotase (342 aa).

Residues H13 and H15 each contribute to the Zn(2+) site. Substrate-binding positions include 15-17 (HLR) and N41. Positions 98, 135, and 173 each coordinate Zn(2+). At K98 the chain carries N6-carboxylysine. H135 lines the substrate pocket. A substrate-binding site is contributed by L218. Zn(2+) is bound at residue D246. Residue D246 is part of the active site. Substrate-binding residues include H250 and A262.

Belongs to the metallo-dependent hydrolases superfamily. DHOase family. Class II DHOase subfamily. Homodimer. The cofactor is Zn(2+).

It carries out the reaction (S)-dihydroorotate + H2O = N-carbamoyl-L-aspartate + H(+). The protein operates within pyrimidine metabolism; UMP biosynthesis via de novo pathway; (S)-dihydroorotate from bicarbonate: step 3/3. Its function is as follows. Catalyzes the reversible cyclization of carbamoyl aspartate to dihydroorotate. This chain is Dihydroorotase, found in Vibrio parahaemolyticus serotype O3:K6 (strain RIMD 2210633).